Consider the following 273-residue polypeptide: Dermonecrotic toxin LarSicTox-alphaVII1 (273 aa).

His5 is a catalytic residue. Glu25 and Asp27 together coordinate Mg(2+). His41 functions as the Nucleophile in the catalytic mechanism. 2 disulfide bridges follow: Cys45–Cys51 and Cys47–Cys192. Asp85 lines the Mg(2+) pocket.

The protein belongs to the arthropod phospholipase D family. Class II subfamily. Requires Mg(2+) as cofactor. Expressed by the venom gland.

The protein localises to the secreted. The catalysed reaction is an N-(acyl)-sphingosylphosphocholine = an N-(acyl)-sphingosyl-1,3-cyclic phosphate + choline. It catalyses the reaction an N-(acyl)-sphingosylphosphoethanolamine = an N-(acyl)-sphingosyl-1,3-cyclic phosphate + ethanolamine. The enzyme catalyses a 1-acyl-sn-glycero-3-phosphocholine = a 1-acyl-sn-glycero-2,3-cyclic phosphate + choline. It carries out the reaction a 1-acyl-sn-glycero-3-phosphoethanolamine = a 1-acyl-sn-glycero-2,3-cyclic phosphate + ethanolamine. Its function is as follows. Dermonecrotic toxins cleave the phosphodiester linkage between the phosphate and headgroup of certain phospholipids (sphingolipid and lysolipid substrates), forming an alcohol (often choline) and a cyclic phosphate. This toxin acts on sphingomyelin (SM). It may also act on ceramide phosphoethanolamine (CPE), lysophosphatidylcholine (LPC) and lysophosphatidylethanolamine (LPE), but not on lysophosphatidylserine (LPS), and lysophosphatidylglycerol (LPG). It acts by transphosphatidylation, releasing exclusively cyclic phosphate products as second products. Induces dermonecrosis, hemolysis, increased vascular permeability, edema, inflammatory response, and platelet aggregation. This chain is Dermonecrotic toxin LarSicTox-alphaVII1, found in Loxosceles arizonica (Arizona brown spider).